Reading from the N-terminus, the 212-residue chain is Large ribosomal subunit protein mL48 (212 aa).

Residues 1–28 (MNGALGKVLCLKNDTIFKQAFSLLRFRT) constitute a mitochondrion transit peptide. Lysine 199 carries the N6-succinyllysine modification.

Belongs to the mitochondrion-specific ribosomal protein mL48 family. As to quaternary structure, component of the mitochondrial ribosome large subunit (39S) which comprises a 16S rRNA and about 50 distinct proteins. Interacts with OXA1L.

The protein localises to the mitochondrion. The sequence is that of Large ribosomal subunit protein mL48 (MRPL48) from Bos taurus (Bovine).